Consider the following 215-residue polypeptide: Small ribosomal subunit protein uS7 (215 aa).

It belongs to the universal ribosomal protein uS7 family. Part of the 30S ribosomal subunit.

One of the primary rRNA binding proteins, it binds directly to 16S rRNA where it nucleates assembly of the head domain of the 30S subunit. Is located at the subunit interface close to the decoding center. This chain is Small ribosomal subunit protein uS7, found in Thermococcus kodakarensis (strain ATCC BAA-918 / JCM 12380 / KOD1) (Pyrococcus kodakaraensis (strain KOD1)).